The following is a 123-amino-acid chain: uncharacterized protein (123 aa).

Positions 1–24 are disordered; that stretch reads MGGGGPPARVQGTEGSQTGGGAVA.

This is an uncharacterized protein from Halorubrum pleomorphic virus 1 (HRPV-1).